A 460-amino-acid polypeptide reads, in one-letter code: UDP-N-acetylmuramate--L-alanine ligase (460 aa).

118 to 124 (GTHGKTT) serves as a coordination point for ATP.

The protein belongs to the MurCDEF family.

It localises to the cytoplasm. It catalyses the reaction UDP-N-acetyl-alpha-D-muramate + L-alanine + ATP = UDP-N-acetyl-alpha-D-muramoyl-L-alanine + ADP + phosphate + H(+). The protein operates within cell wall biogenesis; peptidoglycan biosynthesis. In terms of biological role, cell wall formation. This chain is UDP-N-acetylmuramate--L-alanine ligase, found in Gloeobacter violaceus (strain ATCC 29082 / PCC 7421).